The chain runs to 123 residues: Methicillin resistance regulatory protein MecI (123 aa).

The H-T-H motif DNA-binding region spans 7–71 (EISSAEWEVM…KDNKIFQYYS (65 aa)). The segment at 74–123 (EESDIKYKTSKNFINKVYKGGFNSLVLNFVEKEDLSQDEIEELRNILNKK) is important for dimerization.

Belongs to the BlaI transcriptional regulatory family. Monomer and homodimer. Post-translationally, upon exposure to beta-lactams, proteolytic cleavage at a single site impairs dimerization and abolishes repressor activity.

The protein resides in the cytoplasm. Transcriptional repressor that constitutively blocks the transcription of the gene for the penicillin-binding protein MecA. Binds palindromic DNA with the sequence 5'-TACA-[AT]-N-TGTA-3'. Regulates genes involved in antibiotic resistance. Binds DNA as a dimer. The sequence is that of Methicillin resistance regulatory protein MecI (mecI) from Staphylococcus aureus (strain N315).